A 402-amino-acid polypeptide reads, in one-letter code: UPF0597 protein THA_1286 (402 aa).

Belongs to the UPF0597 family.

This Thermosipho africanus (strain TCF52B) protein is UPF0597 protein THA_1286.